A 643-amino-acid polypeptide reads, in one-letter code: U3 small nucleolar RNA-associated protein 5 (643 aa).

WD repeat units follow at residues 14–54 (GQYL…LYLE), 55–98 (DSKL…VTYK), 186–225 (GHVS…TKCV), 227–266 (VAES…SSTK), 340–389 (SADR…LEQE), and 471–511 (RLKP…IHGG). The segment at 565 to 643 (HSSEPVVEED…EAGYSDVEME (79 aa)) is disordered. Residues 570-611 (VVEEDEDDVEYNEELDDAGLIEDGEESYGSEEEEEGDSDNEE) are compositionally biased toward acidic residues. Over residues 612–626 (EQKHTSSKQDGRLET) the composition is skewed to basic and acidic residues. The span at 627-643 (EQSDGEEEAGYSDVEME) shows a compositional bias: acidic residues.

This sequence belongs to the UTP5 family. As to quaternary structure, interacts with snoRNA U3. Interacts with MPP10. Component of the ribosomal small subunit (SSU) processome composed of at least 40 protein subunits and snoRNA U3. In the absence of snoRNA3, forms a complex with other t-UTPs. This complex can associate with pre-18S ribosomal RNAs.

The protein resides in the nucleus. Its subcellular location is the nucleolus. Involved in nucleolar processing of pre-18S ribosomal RNA. Required for optimal pre-ribosomal RNA transcription by RNA polymerase I together with a subset of U3 proteins required for transcription (t-UTPs). The sequence is that of U3 small nucleolar RNA-associated protein 5 (UTP5) from Saccharomyces cerevisiae (strain ATCC 204508 / S288c) (Baker's yeast).